Here is a 133-residue protein sequence, read N- to C-terminus: S-adenosylmethionine decarboxylase proenzyme (133 aa).

S64 functions as the Schiff-base intermediate with substrate; via pyruvic acid in the catalytic mechanism. S64 bears the Pyruvic acid (Ser); by autocatalysis mark. The Proton acceptor; for processing activity role is filled by H69. C84 serves as the catalytic Proton donor; for catalytic activity.

It belongs to the prokaryotic AdoMetDC family. Type 1 subfamily. Heterotetramer of two alpha and two beta chains arranged as a dimer of alpha/beta heterodimers. The cofactor is pyruvate. Post-translationally, is synthesized initially as an inactive proenzyme. Formation of the active enzyme involves a self-maturation process in which the active site pyruvoyl group is generated from an internal serine residue via an autocatalytic post-translational modification. Two non-identical subunits are generated from the proenzyme in this reaction, and the pyruvate is formed at the N-terminus of the alpha chain, which is derived from the carboxyl end of the proenzyme. The post-translation cleavage follows an unusual pathway, termed non-hydrolytic serinolysis, in which the side chain hydroxyl group of the serine supplies its oxygen atom to form the C-terminus of the beta chain, while the remainder of the serine residue undergoes an oxidative deamination to produce ammonia and the pyruvoyl group blocking the N-terminus of the alpha chain.

It catalyses the reaction S-adenosyl-L-methionine + H(+) = S-adenosyl 3-(methylsulfanyl)propylamine + CO2. It participates in amine and polyamine biosynthesis; S-adenosylmethioninamine biosynthesis; S-adenosylmethioninamine from S-adenosyl-L-methionine: step 1/1. Catalyzes the decarboxylation of S-adenosylmethionine to S-adenosylmethioninamine (dcAdoMet), the propylamine donor required for the synthesis of the polyamines spermine and spermidine from the diamine putrescine. The sequence is that of S-adenosylmethionine decarboxylase proenzyme from Sulfurihydrogenibium sp. (strain YO3AOP1).